Here is a 645-residue protein sequence, read N- to C-terminus: Exoribonuclease 2 (645 aa).

Positions 191–517 (REDLTELNFI…MNHRLLKALI (327 aa)) constitute an RNB domain. Residues 563–645 (HIRYSAEIID…DNRSIIAKIV (83 aa)) enclose the S1 motif domain.

It belongs to the RNR ribonuclease family. RNase II subfamily.

The protein localises to the cytoplasm. It carries out the reaction Exonucleolytic cleavage in the 3'- to 5'-direction to yield nucleoside 5'-phosphates.. Functionally, involved in mRNA degradation. Hydrolyzes single-stranded polyribonucleotides processively in the 3' to 5' direction. The chain is Exoribonuclease 2 from Baumannia cicadellinicola subsp. Homalodisca coagulata.